A 1119-amino-acid polypeptide reads, in one-letter code: Synaptojanin (1119 aa).

The region spanning 119–438 (LQRLLSSQMF…GDQCSTIYAG (320 aa)) is the SAC domain. The interval 532–826 (GTWNVNGGKN…DRSELKTSDH (295 aa)) is catalytic. Disordered stretches follow at residues 986–1005 (SLTLTGSAPDRPRPPSARSE) and 1042–1119 (EHVP…PKNM). The segment covering 1050–1072 (PQSNNNKSPPQACLFNPFTQSAP) has biased composition (low complexity). Pro residues-rich tracts occupy residues 1073 to 1085 (SPAPPPSTIPLPP) and 1093 to 1119 (PGPPAVPVRKAPPPPPRPVIPPRPKNM).

The protein belongs to the synaptojanin family. In the central section; belongs to the inositol 1,4,5-trisphosphate 5-phosphatase family.

It localises to the cytoplasmic vesicle. The protein localises to the secretory vesicle. The protein resides in the synaptic vesicle. It is found in the synapse. It carries out the reaction a 1,2-diacyl-sn-glycero-3-phospho-(1D-myo-inositol-4,5-bisphosphate) + H2O = a 1,2-diacyl-sn-glycero-3-phospho-(1D-myo-inositol 4-phosphate) + phosphate. Functionally, probable inositol 5-phosphatase which regulates synaptic vesicle recycling in neurons by regulating clathrin-mediated endocytosis. The sequence is that of Synaptojanin from Caenorhabditis elegans.